Consider the following 159-residue polypeptide: Globin CTT-W (159 aa).

An N-terminal signal peptide occupies residues Met-1–Ala-16. The Globin domain occupies His-17–Glu-159. The heme b site is built by His-73 and His-108.

This sequence belongs to the globin family.

In Chironomus thummi thummi (Midge), this protein is Globin CTT-W (CTT-W).